The primary structure comprises 95 residues: Protein TusB (95 aa).

This sequence belongs to the DsrH/TusB family. Heterohexamer, formed by a dimer of trimers. The hexameric TusBCD complex contains 2 copies each of TusB, TusC and TusD. The TusBCD complex interacts with TusE.

Its subcellular location is the cytoplasm. In terms of biological role, part of a sulfur-relay system required for 2-thiolation of 5-methylaminomethyl-2-thiouridine (mnm(5)s(2)U) at tRNA wobble positions. This is Protein TusB from Yersinia pseudotuberculosis serotype O:1b (strain IP 31758).